A 642-amino-acid chain; its full sequence is Threonine--tRNA ligase (642 aa).

In terms of domain architecture, TGS spans 1–61 (MPVITLPDGS…ENDAQLSIIT (61 aa)). The catalytic stretch occupies residues 243–534 (DHRKIGKQLD…LTEEFAGFFP (292 aa)). Lysine 286 carries the post-translational modification N6-acetyllysine. Zn(2+) is bound by residues cysteine 334, histidine 385, and histidine 511.

This sequence belongs to the class-II aminoacyl-tRNA synthetase family. In terms of assembly, homodimer. It depends on Zn(2+) as a cofactor.

The protein resides in the cytoplasm. It carries out the reaction tRNA(Thr) + L-threonine + ATP = L-threonyl-tRNA(Thr) + AMP + diphosphate + H(+). In terms of biological role, catalyzes the attachment of threonine to tRNA(Thr) in a two-step reaction: L-threonine is first activated by ATP to form Thr-AMP and then transferred to the acceptor end of tRNA(Thr). Also edits incorrectly charged L-seryl-tRNA(Thr). In Shigella flexneri serotype 5b (strain 8401), this protein is Threonine--tRNA ligase.